A 283-amino-acid chain; its full sequence is MASETASASQWVSPSSRPQHIEQLISGVDRYNPQNLDVLHDYLAQQLDDGSYDLLANLAILKLYQFNPADFNYVVVINILLKALVAAPLPDFNLCISLLGEAPLPTVPVKAEKEATTTDADNAGSLSGDDDDDEVVEKPKDVASAGHLTDPLIVRLSQLSTLLFQARFREFWSTLASESYSDVRDYAAKISEFENAARRVALNSVKGSFTSISEKRIANYLNLSGSQLAEFINAQDGWKLADGTVSVPANPDNEIKATVIREEISLDQMHKFLAQAQSPLLRA.

The PCI domain occupies Tyr-52–Glu-263. The segment at Glu-114–Val-135 is disordered.

It belongs to the eIF-3 subunit K family. As to quaternary structure, component of the eukaryotic translation initiation factor 3 (eIF-3) complex.

It is found in the cytoplasm. Functionally, component of the eukaryotic translation initiation factor 3 (eIF-3) complex, which is involved in protein synthesis of a specialized repertoire of mRNAs and, together with other initiation factors, stimulates binding of mRNA and methionyl-tRNAi to the 40S ribosome. The eIF-3 complex specifically targets and initiates translation of a subset of mRNAs involved in cell proliferation. The chain is Eukaryotic translation initiation factor 3 subunit K from Mycosarcoma maydis (Corn smut fungus).